We begin with the raw amino-acid sequence, 302 residues long: Probable alpha-L-glutamate ligase (302 aa).

The ATP-grasp domain maps to 104 to 287; the sequence is LQLLSRKGVG…VAGLLIKFIE (184 aa). Residues K141, 178-179, D187, and 211-213 contribute to the ATP site; these read EY and RSN. The Mg(2+) site is built by D248, E260, and N262. Mn(2+) is bound by residues D248, E260, and N262.

Belongs to the RimK family. Mg(2+) serves as cofactor. It depends on Mn(2+) as a cofactor.

This chain is Probable alpha-L-glutamate ligase, found in Alcanivorax borkumensis (strain ATCC 700651 / DSM 11573 / NCIMB 13689 / SK2).